We begin with the raw amino-acid sequence, 394 residues long: MKILVLNSGSSSIKFKLFEKDEALASGLVEKIGEQNSKIELKDLKSGQKYKKELAIKDHEQGIELVNELFAQSGILHDLNELDGCGHRIVHGGPNLTKHCLVDDEILKEIDRVAHIAPLHNPAHLIGIKTMIKAAPKVPNVTVFDTAFHQSMPDYAYMYALPYEFYEKHQVRKYGFHGTSHSYVSKQAAYILGKNINEFNAISAHLGNGASVCAIENGKCVDTSMGFTPLEGLIMGTRCGDIDPAVLPFLAKELNLNPSDLDTMMNKKSGVYGICGFNDFRDIEAQIEQNNEKARLALDMFCYRLSKYIGSYFAILPRVDALIFTAGIGENDDIVRAKVCQRLAHLGFDIDLDKNAQLRNGEISKKDSKIKILIVPTEEELEIAKITTELIKNK.

Asn-7 contacts Mg(2+). Lys-14 provides a ligand contact to ATP. Substrate is bound at residue Arg-88. Asp-145 (proton donor/acceptor) is an active-site residue. Residues 205-209 (HLGNG), 279-281 (DFR), and 327-331 (GIGEN) contribute to the ATP site. Glu-379 serves as a coordination point for Mg(2+).

It belongs to the acetokinase family. Homodimer. It depends on Mg(2+) as a cofactor. The cofactor is Mn(2+).

The protein resides in the cytoplasm. It carries out the reaction acetate + ATP = acetyl phosphate + ADP. The protein operates within metabolic intermediate biosynthesis; acetyl-CoA biosynthesis; acetyl-CoA from acetate: step 1/2. In terms of biological role, catalyzes the formation of acetyl phosphate from acetate and ATP. Can also catalyze the reverse reaction. This is Acetate kinase from Campylobacter lari (strain RM2100 / D67 / ATCC BAA-1060).